A 325-amino-acid chain; its full sequence is Hydroxymethylglutaryl-CoA lyase, mitochondrial (325 aa).

A mitochondrion-targeting transit peptide spans 1–27 (MAAMRKALPRRLVGLASLRAVSTSSMG). The region spanning 33-300 (VKIVEVGPRD…HTGVNLQKLL (268 aa)) is the Pyruvate carboxyltransferase domain. Arginine 41 lines the substrate pocket. Residue aspartate 42 coordinates a divalent metal cation. Residue lysine 48 is modified to N6-acetyllysine; alternate. The residue at position 48 (lysine 48) is an N6-succinyllysine; alternate. Lysine 111 carries the N6-acetyllysine modification. 2 positions are modified to N6-acetyllysine; alternate: lysine 137 and lysine 179. N6-succinyllysine; alternate occurs at positions 137 and 179. The a divalent metal cation site is built by histidine 233 and histidine 235. Cysteine 266 is an active-site residue. Asparagine 275 contributes to the a divalent metal cation binding site. The short motif at 323-325 (CKL) is the Microbody targeting signal element. Position 324 is an N6-acetyllysine (lysine 324).

Belongs to the HMG-CoA lyase family. In terms of assembly, homodimer; disulfide-linked. Can also form homotetramers. The cofactor is a divalent metal cation. In terms of tissue distribution, highest expression in liver. Expressed in pancreas, kidney, intestine, testis, fibroblasts and lymphoblasts. Very low expression in brain and skeletal muscle. The relative expression of isoform 2 (at mRNA level) is highest in heart (30%), skeletal muscle (22%), and brain (14%).

The protein resides in the mitochondrion matrix. It localises to the peroxisome. The enzyme catalyses (3S)-3-hydroxy-3-methylglutaryl-CoA = acetoacetate + acetyl-CoA. It functions in the pathway metabolic intermediate metabolism; (S)-3-hydroxy-3-methylglutaryl-CoA degradation; acetoacetate from (S)-3-hydroxy-3-methylglutaryl-CoA: step 1/1. Stimulated by reducing agents such as dithiothreitol (DTT). Mitochondrial 3-hydroxy-3-methylglutaryl-CoA lyase that catalyzes a cation-dependent cleavage of (S)-3-hydroxy-3-methylglutaryl-CoA into acetyl-CoA and acetoacetate, a key step in ketogenesis. Terminal step in leucine catabolism. Ketone bodies (beta-hydroxybutyrate, acetoacetate and acetone) are essential as an alternative source of energy to glucose, as lipid precursors and as regulators of metabolism. The protein is Hydroxymethylglutaryl-CoA lyase, mitochondrial (HMGCL) of Homo sapiens (Human).